Here is a 208-residue protein sequence, read N- to C-terminus: Large ribosomal subunit protein uL3 (208 aa).

This sequence belongs to the universal ribosomal protein uL3 family. As to quaternary structure, part of the 50S ribosomal subunit. Forms a cluster with proteins L14 and L19.

One of the primary rRNA binding proteins, it binds directly near the 3'-end of the 23S rRNA, where it nucleates assembly of the 50S subunit. This chain is Large ribosomal subunit protein uL3, found in Salinibacter ruber (strain DSM 13855 / M31).